The following is a 121-amino-acid chain: Large ribosomal subunit protein uL14 (121 aa).

Belongs to the universal ribosomal protein uL14 family. Part of the 50S ribosomal subunit. Forms a cluster with proteins L3 and L19. In the 70S ribosome, L14 and L19 interact and together make contacts with the 16S rRNA in bridges B5 and B8.

Its function is as follows. Binds to 23S rRNA. Forms part of two intersubunit bridges in the 70S ribosome. The chain is Large ribosomal subunit protein uL14 from Legionella pneumophila (strain Corby).